Here is a 155-residue protein sequence, read N- to C-terminus: Large ribosomal subunit protein bL17 (155 aa).

It belongs to the bacterial ribosomal protein bL17 family. As to quaternary structure, part of the 50S ribosomal subunit. Contacts protein L32.

This is Large ribosomal subunit protein bL17 from Syntrophotalea carbinolica (strain DSM 2380 / NBRC 103641 / GraBd1) (Pelobacter carbinolicus).